The sequence spans 191 residues: Large ribosomal subunit protein uL6 (191 aa).

This sequence belongs to the universal ribosomal protein uL6 family. In terms of assembly, component of the large ribosomal subunit. Mature ribosomes consist of a small (40S) and a large (60S) subunit. The 40S subunit contains about 32 different proteins and 1 molecule of RNA (18S). The 60S subunit contains 45 different proteins and 3 molecules of RNA (25S, 5.8S and 5S).

Its subcellular location is the cytoplasm. Component of the ribosome, a large ribonucleoprotein complex responsible for the synthesis of proteins in the cell. The small ribosomal subunit (SSU) binds messenger RNAs (mRNAs) and translates the encoded message by selecting cognate aminoacyl-transfer RNA (tRNA) molecules. The large subunit (LSU) contains the ribosomal catalytic site termed the peptidyl transferase center (PTC), which catalyzes the formation of peptide bonds, thereby polymerizing the amino acids delivered by tRNAs into a polypeptide chain. The nascent polypeptides leave the ribosome through a tunnel in the LSU and interact with protein factors that function in enzymatic processing, targeting, and the membrane insertion of nascent chains at the exit of the ribosomal tunnel. The sequence is that of Large ribosomal subunit protein uL6 from Candida albicans (strain SC5314 / ATCC MYA-2876) (Yeast).